We begin with the raw amino-acid sequence, 1657 residues long: Ras GTPase-activating-like protein IQGAP1 (1657 aa).

The residue at position 2 (Ser2) is an N-acetylserine. Position 2 is a phosphoserine (Ser2). In terms of domain architecture, Calponin-homology (CH) spans 44–159 (LCHLEEAKRW…YCIHALSLYL (116 aa)). Tyr172 carries the post-translational modification Phosphotyrosine. The residue at position 330 (Ser330) is a Phosphoserine. The region spanning 679 to 712 (GDNNSKWVKHWVKGGYYYYHNLETQEGGWDEPPN) is the WW domain. IQ domains follow at residues 745–774 (NEGL…FLKK), 775–804 (QIPA…YLRS), 805–834 (HKDE…YFRD), and 835–864 (HIND…AEDP). The segment at 956–1274 (GGLKALSKEK…FFQTACDVPE (319 aa)) is C1. The Ras-GAP domain maps to 1020–1269 (YLLLRLFKTA…QKFRRFFQTA (250 aa)). The interval 1276–1657 (QDKFNVDEYS…FLLNKKFYGK (382 aa)) is C2. The segment at 1410 to 1448 (TPATSEQEAEHQRAMQRRAIRDAKTPDKMKKSKSVKEDS) is disordered. Over residues 1417-1448 (EAEHQRAMQRRAIRDAKTPDKMKKSKSVKEDS) the composition is skewed to basic and acidic residues. At Ser1441 the chain carries Phosphoserine; by PKC. Phosphoserine; by PKC/PRKCE is present on Ser1443.

Interacts with CDC42; the interaction is demonstrated with IQGAP1 in GTP-bound and in nucleotide-free state. Interacts with RAC1. Does not interact with RHOA. Interacts with TSG101. Interacts with PAK6. Interacts with TMEM14B; this interaction increases IQGAP1 phosphorylation and induces its nuclear translocation. Interacts with SASH1. Interacts with PJVK. Interacts with SLC26A4; this interaction enhances the chloride-bicarbonate exchange activity of SLC26A4. Interacts with SVEP1. Interacts with ILK; the interaction is required for localization of IQGAP to the cell cortex. In terms of assembly, (Microbial infection) Interacts with ebolavirus vp40. As to quaternary structure, (Microbial infection) Interacts with human cytomegalovirus protein UL5. (Microbial infection) Interacts with C.jejuni invasion antigen D (CiaD). Post-translationally, phosphorylation of Ser-1443 by PKC/PRKCE prevents interaction between C1 and C2, allowing binding of nucleotide-free CDC42. Ser-1443 phosphorylation enhances the ability to promote neurite outgrowth. In terms of tissue distribution, expressed in the placenta, lung, and kidney. A lower level expression is seen in the heart, liver, skeletal muscle and pancreas.

The protein resides in the cell membrane. It is found in the nucleus. Its subcellular location is the cytoplasm. It localises to the cell cortex. The protein localises to the apical cell membrane. The protein resides in the basolateral cell membrane. In terms of biological role, plays a crucial role in regulating the dynamics and assembly of the actin cytoskeleton. Recruited to the cell cortex by interaction with ILK which allows it to cooperate with its effector DIAPH1 to locally stabilize microtubules and allow stable insertion of caveolae into the plasma membrane. Binds to activated CDC42 but does not stimulate its GTPase activity. Associates with calmodulin. May promote neurite outgrowth. May play a possible role in cell cycle regulation by contributing to cell cycle progression after DNA replication arrest. The protein is Ras GTPase-activating-like protein IQGAP1 (IQGAP1) of Homo sapiens (Human).